The primary structure comprises 111 residues: Large ribosomal subunit protein uL22 (111 aa).

This sequence belongs to the universal ribosomal protein uL22 family. In terms of assembly, part of the 50S ribosomal subunit.

Its function is as follows. This protein binds specifically to 23S rRNA; its binding is stimulated by other ribosomal proteins, e.g. L4, L17, and L20. It is important during the early stages of 50S assembly. It makes multiple contacts with different domains of the 23S rRNA in the assembled 50S subunit and ribosome. In terms of biological role, the globular domain of the protein is located near the polypeptide exit tunnel on the outside of the subunit, while an extended beta-hairpin is found that lines the wall of the exit tunnel in the center of the 70S ribosome. The polypeptide is Large ribosomal subunit protein uL22 (Geotalea uraniireducens (strain Rf4) (Geobacter uraniireducens)).